The chain runs to 720 residues: Dedicator of cytokinesis protein 9 (720 aa).

Residues 186-638 (KSYASTPELR…LSDIIVPRIC (453 aa)) form the DOCKER domain. The interaction with CDC42 stretch occupies residues 277-638 (DEEASMMEDV…LSDIIVPRIC (362 aa)).

The protein belongs to the DOCK family. As to quaternary structure, homodimer. Interacts preferentially with nucleotide-depleted CDC42.

Its subcellular location is the endomembrane system. Its function is as follows. Guanine nucleotide-exchange factor (GEF) that activates CDC42 by exchanging bound GDP for free GTP. Overexpression induces filopodia formation. This Rattus norvegicus (Rat) protein is Dedicator of cytokinesis protein 9 (Dock9).